Here is a 472-residue protein sequence, read N- to C-terminus: Glutamate--tRNA ligase (472 aa).

A 'HIGH' region motif is present at residues 9–19; the sequence is PSPTGPLHIGS. A 'KMSKS' region motif is present at residues 237-241; the sequence is KLSKR. Lys240 contacts ATP.

It belongs to the class-I aminoacyl-tRNA synthetase family. Glutamate--tRNA ligase type 1 subfamily. As to quaternary structure, monomer.

The protein localises to the cytoplasm. The catalysed reaction is tRNA(Glu) + L-glutamate + ATP = L-glutamyl-tRNA(Glu) + AMP + diphosphate. Functionally, catalyzes the attachment of glutamate to tRNA(Glu) in a two-step reaction: glutamate is first activated by ATP to form Glu-AMP and then transferred to the acceptor end of tRNA(Glu). The polypeptide is Glutamate--tRNA ligase (Buchnera aphidicola subsp. Baizongia pistaciae (strain Bp)).